Consider the following 265-residue polypeptide: Phosphatidylserine decarboxylase proenzyme (265 aa).

Catalysis depends on S183, which acts as the Schiff-base intermediate with substrate; via pyruvic acid. Pyruvic acid (Ser); by autocatalysis is present on S183. The segment at 218 to 242 (PQIESEPESEPALQTAPVETAANPS) is disordered.

It belongs to the phosphatidylserine decarboxylase family. PSD-A subfamily. As to quaternary structure, heterodimer of a large membrane-associated beta subunit and a small pyruvoyl-containing alpha subunit. Requires pyruvate as cofactor. In terms of processing, is synthesized initially as an inactive proenzyme. Formation of the active enzyme involves a self-maturation process in which the active site pyruvoyl group is generated from an internal serine residue via an autocatalytic post-translational modification. Two non-identical subunits are generated from the proenzyme in this reaction, and the pyruvate is formed at the N-terminus of the alpha chain, which is derived from the carboxyl end of the proenzyme. The post-translation cleavage follows an unusual pathway, termed non-hydrolytic serinolysis, in which the side chain hydroxyl group of the serine supplies its oxygen atom to form the C-terminus of the beta chain, while the remainder of the serine residue undergoes an oxidative deamination to produce ammonia and the pyruvoyl prosthetic group on the alpha chain.

Its subcellular location is the cell membrane. The catalysed reaction is a 1,2-diacyl-sn-glycero-3-phospho-L-serine + H(+) = a 1,2-diacyl-sn-glycero-3-phosphoethanolamine + CO2. It functions in the pathway phospholipid metabolism; phosphatidylethanolamine biosynthesis; phosphatidylethanolamine from CDP-diacylglycerol: step 2/2. Catalyzes the formation of phosphatidylethanolamine (PtdEtn) from phosphatidylserine (PtdSer). This chain is Phosphatidylserine decarboxylase proenzyme, found in Neisseria meningitidis serogroup C (strain 053442).